Consider the following 504-residue polypeptide: Maturase K (504 aa).

It belongs to the intron maturase 2 family. MatK subfamily.

It is found in the plastid. The protein localises to the chloroplast. Usually encoded in the trnK tRNA gene intron. Probably assists in splicing its own and other chloroplast group II introns. This Pentaplaris doroteae protein is Maturase K.